A 153-amino-acid chain; its full sequence is Regulatory protein RecX (153 aa).

The protein belongs to the RecX family.

The protein localises to the cytoplasm. Modulates RecA activity. This is Regulatory protein RecX from Mannheimia succiniciproducens (strain KCTC 0769BP / MBEL55E).